We begin with the raw amino-acid sequence, 367 residues long: Spore wall protein 9 (367 aa).

Positions 1–29 are cleaved as a signal peptide; that stretch reads MSTQPTKTSSTKLRIFKWLFIISTLVAIA.

In terms of assembly, interacts with SWP7.

The protein resides in the cytoplasm. It localises to the spore wall. The protein localises to the spore polar tube. Involved in adherence of spores to the host cell surface and in infection efficiency. In Nosema bombycis (strain CQ1 / CVCC 102059) (Microsporidian parasite), this protein is Spore wall protein 9.